We begin with the raw amino-acid sequence, 211 residues long: Thymidylate kinase (211 aa).

ATP is bound at residue 10 to 17 (GPDGAGKT).

The protein belongs to the thymidylate kinase family.

The enzyme catalyses dTMP + ATP = dTDP + ADP. In terms of biological role, phosphorylation of dTMP to form dTDP in both de novo and salvage pathways of dTTP synthesis. In Lactococcus lactis subsp. cremoris (strain SK11), this protein is Thymidylate kinase.